The following is a 119-amino-acid chain: NAD(P)H-quinone oxidoreductase subunit M (119 aa).

The protein belongs to the complex I NdhM subunit family. As to quaternary structure, NDH-1 can be composed of about 15 different subunits; different subcomplexes with different compositions have been identified which probably have different functions.

It is found in the cellular thylakoid membrane. It catalyses the reaction a plastoquinone + NADH + (n+1) H(+)(in) = a plastoquinol + NAD(+) + n H(+)(out). The catalysed reaction is a plastoquinone + NADPH + (n+1) H(+)(in) = a plastoquinol + NADP(+) + n H(+)(out). Its function is as follows. NDH-1 shuttles electrons from an unknown electron donor, via FMN and iron-sulfur (Fe-S) centers, to quinones in the respiratory and/or the photosynthetic chain. The immediate electron acceptor for the enzyme in this species is believed to be plastoquinone. Couples the redox reaction to proton translocation, and thus conserves the redox energy in a proton gradient. Cyanobacterial NDH-1 also plays a role in inorganic carbon-concentration. In Picosynechococcus sp. (strain ATCC 27264 / PCC 7002 / PR-6) (Agmenellum quadruplicatum), this protein is NAD(P)H-quinone oxidoreductase subunit M.